The following is a 292-amino-acid chain: 2-(5''-triphosphoribosyl)-3'-dephosphocoenzyme-A synthase (292 aa).

Belongs to the CitG/MdcB family.

It catalyses the reaction 3'-dephospho-CoA + ATP = 2'-(5''-triphospho-alpha-D-ribosyl)-3'-dephospho-CoA + adenine. Catalyzes the formation of 2-(5''-triphosphoribosyl)-3'-dephosphocoenzyme-A, the precursor of the prosthetic group of the holo-acyl carrier protein (gamma chain) of citrate lyase, from ATP and dephospho-CoA. In Escherichia coli (strain SMS-3-5 / SECEC), this protein is 2-(5''-triphosphoribosyl)-3'-dephosphocoenzyme-A synthase.